Here is a 285-residue protein sequence, read N- to C-terminus: NAD kinase (285 aa).

Aspartate 66 (proton acceptor) is an active-site residue. NAD(+) contacts are provided by residues 66–67, 137–138, arginine 148, arginine 165, aspartate 167, and 178–183; these read DG, ND, and TAYSLS.

It belongs to the NAD kinase family. A divalent metal cation is required as a cofactor.

The protein resides in the cytoplasm. It catalyses the reaction NAD(+) + ATP = ADP + NADP(+) + H(+). Its function is as follows. Involved in the regulation of the intracellular balance of NAD and NADP, and is a key enzyme in the biosynthesis of NADP. Catalyzes specifically the phosphorylation on 2'-hydroxyl of the adenosine moiety of NAD to yield NADP. The chain is NAD kinase from Chlorobium phaeobacteroides (strain BS1).